A 643-amino-acid polypeptide reads, in one-letter code: Phosphatidylinositol-3,5-bisphosphate 3-phosphatase MTMR2 (643 aa).

Composition is skewed to polar residues over residues Met-1–Ser-12 and Asp-23–Lys-40. The segment at Met-1–Ala-54 is disordered. Phosphoserine is present on residues Ser-6 and Ser-9. The segment covering Ser-41 to Ala-54 has biased composition (low complexity). Ser-58 bears the Phosphoserine mark. Residues Asn-68–Gly-139 enclose the GRAM domain. A Myotubularin phosphatase domain is found at Gly-205–Tyr-580. The a 1,2-diacyl-sn-glycero-3-phospho-(1D-myo-inositol-3,5-bisphosphate) site is built by Asn-330, Asn-355, and Ile-356. A 1,2-diacyl-sn-glycero-3-phospho-(1D-myo-inositol-3-phosphate)-binding residues include Asn-330, Asn-355, and Ile-356. Cys-417 functions as the Phosphocysteine intermediate in the catalytic mechanism. The a 1,2-diacyl-sn-glycero-3-phospho-(1D-myo-inositol-3,5-bisphosphate) site is built by Ser-418, Asp-419, Gly-420, Trp-421, Asp-422, Arg-423, Arg-459, and Arg-463. A 1,2-diacyl-sn-glycero-3-phospho-(1D-myo-inositol-3-phosphate) is bound by residues Ser-418, Asp-419, Gly-420, Trp-421, Asp-422, and Arg-423. Arg-463 lines the a 1,2-diacyl-sn-glycero-3-phospho-(1D-myo-inositol-3-phosphate) pocket. The stretch at Ile-593–Glu-627 forms a coiled coil. A disordered region spans residues Leu-614 to Val-643.

The protein belongs to the protein-tyrosine phosphatase family. Non-receptor class myotubularin subfamily. Homodimer (via coiled-coil domain). Heterotetramer consisting of one MTMR2 dimer and one SBF2/MTMR13 dimer; specifically in peripheral nerves stabilizes SBF2/MTMR13 at the membranes and increases MTMR2 catalytic activity towards phosphatidylinositol 3,5-bisphosphate and to a lesser extent towards phosphatidylinositol 3-phosphate. Heterodimer with SBF1/MTMR5; acts as an adapter for the phosphatase MTMR2 to regulate MTMR2 catalytic activity and subcellular location. Heterodimer with MTMR12. Post-translationally, phosphorylation at Ser-58 decreases MTMR2 localization to endocytic vesicular structures.

The protein resides in the cytoplasm. The protein localises to the early endosome membrane. Its subcellular location is the perinuclear region. It is found in the cell projection. It localises to the axon. The protein resides in the endosome membrane. It catalyses the reaction a 1,2-diacyl-sn-glycero-3-phospho-(1D-myo-inositol-3,5-bisphosphate) + H2O = a 1,2-diacyl-sn-glycero-3-phospho-(1D-myo-inositol-5-phosphate) + phosphate. It carries out the reaction a 1,2-diacyl-sn-glycero-3-phospho-(1D-myo-inositol-3-phosphate) + H2O = a 1,2-diacyl-sn-glycero-3-phospho-(1D-myo-inositol) + phosphate. The catalysed reaction is 1,2-dioctanoyl-sn-glycero-3-phospho-(1-D-myo-inositol-3-phosphate) + H2O = 1,2-dioctanoyl-sn-glycero-3-phospho-(1D-myo-inositol) + phosphate. The enzyme catalyses 1,2-dioctanoyl-sn-glycero-3-phospho-(1D-myo-inositol-3,5-bisphosphate) + H2O = 1,2-dioctanoyl-sn-glycero-3-phospho-(1D-myo-inositol-5-phosphate) + phosphate. Lipid phosphatase that specifically dephosphorylates the D-3 position of phosphatidylinositol 3-phosphate and phosphatidylinositol 3,5-bisphosphate, generating phosphatidylinositol and phosphatidylinositol 5-phosphate. Regulates the level of these phosphoinositides critical for various biological processes including autophagy initiation and autophagosome maturation. The chain is Phosphatidylinositol-3,5-bisphosphate 3-phosphatase MTMR2 from Bos taurus (Bovine).